A 178-amino-acid polypeptide reads, in one-letter code: Cytidylate kinase (178 aa).

Position 7 to 15 (7 to 15) interacts with ATP; that stretch reads GLPGTGTTT.

Belongs to the cytidylate kinase family. Type 2 subfamily.

It localises to the cytoplasm. It carries out the reaction CMP + ATP = CDP + ADP. The enzyme catalyses dCMP + ATP = dCDP + ADP. In Methanococcus maripaludis (strain DSM 14266 / JCM 13030 / NBRC 101832 / S2 / LL), this protein is Cytidylate kinase.